We begin with the raw amino-acid sequence, 199 residues long: Large ribosomal subunit protein bL25 (199 aa).

The protein belongs to the bacterial ribosomal protein bL25 family. CTC subfamily. As to quaternary structure, part of the 50S ribosomal subunit; part of the 5S rRNA/L5/L18/L25 subcomplex. Contacts the 5S rRNA. Binds to the 5S rRNA independently of L5 and L18.

In terms of biological role, this is one of the proteins that binds to the 5S RNA in the ribosome where it forms part of the central protuberance. In Pelodictyon phaeoclathratiforme (strain DSM 5477 / BU-1), this protein is Large ribosomal subunit protein bL25.